The sequence spans 277 residues: 3-methyl-2-oxobutanoate hydroxymethyltransferase (277 aa).

Mg(2+) is bound by residues Asp-42 and Asp-81. 3-methyl-2-oxobutanoate-binding positions include Asp-42–Ser-43, Asp-81, and Lys-110. Glu-112 contacts Mg(2+). Glu-179 (proton acceptor) is an active-site residue.

The protein belongs to the PanB family. In terms of assembly, homodecamer; pentamer of dimers. The cofactor is Mg(2+).

It localises to the cytoplasm. The catalysed reaction is 3-methyl-2-oxobutanoate + (6R)-5,10-methylene-5,6,7,8-tetrahydrofolate + H2O = 2-dehydropantoate + (6S)-5,6,7,8-tetrahydrofolate. It functions in the pathway cofactor biosynthesis; (R)-pantothenate biosynthesis; (R)-pantoate from 3-methyl-2-oxobutanoate: step 1/2. Its function is as follows. Catalyzes the reversible reaction in which hydroxymethyl group from 5,10-methylenetetrahydrofolate is transferred onto alpha-ketoisovalerate to form ketopantoate. The sequence is that of 3-methyl-2-oxobutanoate hydroxymethyltransferase from Anaplasma marginale (strain St. Maries).